Consider the following 368-residue polypeptide: 3-dehydroquinate synthase (368 aa).

NAD(+)-binding positions include 69–74 (DGEAYK), 103–107 (GVIGD), 127–128 (TT), Lys-140, and Lys-149. The Zn(2+) site is built by Glu-182, His-245, and His-262.

Belongs to the sugar phosphate cyclases superfamily. Dehydroquinate synthase family. Co(2+) serves as cofactor. It depends on Zn(2+) as a cofactor. Requires NAD(+) as cofactor.

It is found in the cytoplasm. The enzyme catalyses 7-phospho-2-dehydro-3-deoxy-D-arabino-heptonate = 3-dehydroquinate + phosphate. It participates in metabolic intermediate biosynthesis; chorismate biosynthesis; chorismate from D-erythrose 4-phosphate and phosphoenolpyruvate: step 2/7. Catalyzes the conversion of 3-deoxy-D-arabino-heptulosonate 7-phosphate (DAHP) to dehydroquinate (DHQ). This is 3-dehydroquinate synthase from Pseudomonas aeruginosa (strain UCBPP-PA14).